A 158-amino-acid polypeptide reads, in one-letter code: SsrA-binding protein (158 aa).

The interval 131-158 (KQLHDKRQTEKERDWNKQKQRILQTNQR) is disordered. Residues 132-147 (QLHDKRQTEKERDWNK) are compositionally biased toward basic and acidic residues.

The protein belongs to the SmpB family.

The protein resides in the cytoplasm. Its function is as follows. Required for rescue of stalled ribosomes mediated by trans-translation. Binds to transfer-messenger RNA (tmRNA), required for stable association of tmRNA with ribosomes. tmRNA and SmpB together mimic tRNA shape, replacing the anticodon stem-loop with SmpB. tmRNA is encoded by the ssrA gene; the 2 termini fold to resemble tRNA(Ala) and it encodes a 'tag peptide', a short internal open reading frame. During trans-translation Ala-aminoacylated tmRNA acts like a tRNA, entering the A-site of stalled ribosomes, displacing the stalled mRNA. The ribosome then switches to translate the ORF on the tmRNA; the nascent peptide is terminated with the 'tag peptide' encoded by the tmRNA and targeted for degradation. The ribosome is freed to recommence translation, which seems to be the essential function of trans-translation. This chain is SsrA-binding protein, found in Teredinibacter turnerae (strain ATCC 39867 / T7901).